A 132-amino-acid chain; its full sequence is Sirohydrochlorin cobaltochelatase (132 aa).

Residue His-10 is the Proton acceptor of the active site. Residue His-10 participates in Co(2+) binding. Substrate-binding positions include Arg-46 and 69 to 74 (ISYGLH). His-74 serves as a coordination point for Co(2+).

Belongs to the CbiX family. CbiXS subfamily. In terms of assembly, homotetramer; dimer of dimers.

It carries out the reaction Co-sirohydrochlorin + 2 H(+) = sirohydrochlorin + Co(2+). Its pathway is cofactor biosynthesis; adenosylcobalamin biosynthesis; cob(II)yrinate a,c-diamide from sirohydrochlorin (anaerobic route): step 1/10. Its function is as follows. Catalyzes the insertion of Co(2+) into sirohydrochlorin as part of the anaerobic pathway to cobalamin biosynthesis. This is Sirohydrochlorin cobaltochelatase from Archaeoglobus fulgidus (strain ATCC 49558 / DSM 4304 / JCM 9628 / NBRC 100126 / VC-16).